A 663-amino-acid polypeptide reads, in one-letter code: Heparan-alpha-glucosaminide N-acetyltransferase (663 aa).

The tract at residues 1–24 is disordered; the sequence is MTGARASAAEQRRAGRSGQARAAE. The Lumenal, vesicle segment spans residues 1-190; it reads MTGARASAAE…LAVNEDPVDS (190 aa). 3 N-linked (GlcNAc...) asparagine glycosylation sites follow: N94, N142, and N162. A disulfide bridge links C151 with C462. A helical membrane pass occupies residues 191-211; that stretch reads NLPVSIAFLIGLAVIIVISFL. At 212–275 the chain is on the cytoplasmic side; it reads RLLLSLDDFN…PRLRSVDTFR (64 aa). Residues S243 and S245 each carry the phosphoserine modification. Residues 276–296 form a helical membrane-spanning segment; that stretch reads GIALILMVFVNYGGGKYWYFK. Residue H297 is part of the active site. The Lumenal, vesicle portion of the chain corresponds to 297 to 302; that stretch reads HASWNG. A helical membrane pass occupies residues 303-323; the sequence is LTVADLVFPWFVFIMGSSIFL. The Cytoplasmic segment spans residues 324 to 345; that stretch reads SMTSILQRGCSKFRLLGKIAWR. The helical transmembrane segment at 346-366 threads the bilayer; it reads SFLLICIGIIIVNPNYCLGPL. Over 367 to 374 the chain is Lumenal, vesicle; that stretch reads SWDKVRIP. A helical transmembrane segment spans residues 375–395; it reads GVLQRLGVTYFVVAVLELLFA. Over 396–420 the chain is Cytoplasmic; that stretch reads KPVPEHCASERSCLSLRDITSSWPQ. A helical membrane pass occupies residues 421-441; sequence WLLILVLEGLWLGLTFLLPVP. Topologically, residues 442–500 are lumenal, vesicle; it reads GCPTGYLGPGGIGDFGKYPNCTGGAAGYIDRLLLGDDHLYQHPSSAVLYHTEVAYDPEG. Residues 501-521 form a helical membrane-spanning segment; sequence ILGTINSIVMAFLGVQAGKIL. At 522-529 the chain is on the cytoplasmic side; sequence LYYKARTK. A helical membrane pass occupies residues 530-550; that stretch reads DILIRFTAWCCILGLISVALT. Residues 551–564 lie on the Lumenal, vesicle side of the membrane; the sequence is KVSENEGFIPVNKN. Residues 565 to 585 traverse the membrane as a helical segment; it reads LWSLSYVTTLSSFAFFILLVL. The Cytoplasmic portion of the chain corresponds to 586-592; sequence YPVVDVK. The chain crosses the membrane as a helical span at residues 593 to 613; sequence GLWTGTPFFYPGMNSILVYVG. Topologically, residues 614-634 are lumenal, vesicle; it reads HEVFENYFPFQWKLKDNQSHK. The segment at 624–635 is lysosomal targeting region; that stretch reads QWKLKDNQSHKE. Residues 635–655 form a helical membrane-spanning segment; the sequence is EHLTQNIVATALWVLIAYILY. Topologically, residues 656–663 are cytoplasmic; sequence RKKIFWKI.

As to quaternary structure, homooligomer. Homooligomerization is necessary for enzyme activity. Post-translationally, undergoes intralysosomal proteolytic cleavage; occurs within the end of the first and/or the beginning of the second luminal domain and is essential for the activation of the enzyme. Glycosylated. In terms of tissue distribution, widely expressed, with highest level in leukocytes, heart, liver, skeletal muscle, lung, placenta and liver.

It localises to the lysosome membrane. It catalyses the reaction alpha-D-glucosaminyl-[heparan sulfate](n) + acetyl-CoA = N-acetyl-alpha-D-glucosaminyl-[heparan sulfate](n) + CoA + H(+). In terms of biological role, lysosomal acetyltransferase that acetylates the non-reducing terminal alpha-glucosamine residue of intralysosomal heparin or heparan sulfate, converting it into a substrate for luminal alpha-N-acetyl glucosaminidase. This Homo sapiens (Human) protein is Heparan-alpha-glucosaminide N-acetyltransferase (HGSNAT).